Consider the following 150-residue polypeptide: Large ribosomal subunit protein bL9 (150 aa).

It belongs to the bacterial ribosomal protein bL9 family.

Its function is as follows. Binds to the 23S rRNA. In Shewanella woodyi (strain ATCC 51908 / MS32), this protein is Large ribosomal subunit protein bL9.